We begin with the raw amino-acid sequence, 367 residues long: Popeye domain-containing protein 2 (367 aa).

N-linked (GlcNAc...) asparagine glycosylation occurs at asparagine 4. Transmembrane regions (helical) follow at residues 36 to 56 and 77 to 97; these read FLLM…LFGI and IVLW…QLVY. Disordered stretches follow at residues 273–292 and 312–367; these read PSAS…ALEA and APPA…TPEL. Over residues 278–290 the composition is skewed to acidic residues; the sequence is GEPESEKDDEEAL. Over residues 344–356 the composition is skewed to polar residues; that stretch reads PLQNSSQVMSRSQ. N-linked (GlcNAc...) asparagine glycosylation is present at asparagine 347. At threonine 364 the chain carries Phosphothreonine.

Belongs to the popeye family. In terms of tissue distribution, expressed in the developing and adult heart, with high expression levels in the sinus and atrioventricular nodes. Also expressed in the bladder and skeletal muscle.

The protein resides in the membrane. Its subcellular location is the cell membrane. It localises to the sarcolemma. Functionally, important for the maintenance of cardiac function. Plays a regulatory function in heart rate dynamics mediated, at least in part, through cAMP-binding and, probably, by increasing cell surface expression of the potassium channel KCNK2 and enhancing current density. The chain is Popeye domain-containing protein 2 (Popdc2) from Mus musculus (Mouse).